The chain runs to 624 residues: DNA-directed RNA polymerase III subunit rpc-3 (624 aa).

Disordered stretches follow at residues 229-260 (KRKL…EEDL) and 373-418 (LAPK…ARMS). The segment covering 385–403 (DDSDDDEEDGDYSDSDEEM) has biased composition (acidic residues). The interval 551–572 (CYATMVHCLQVLEVRRQKDKDV) is leucine-zipper.

This sequence belongs to the RNA polymerase beta chain family. In terms of assembly, component of the RNA polymerase III (Pol III) complex consisting of 17 subunits.

It is found in the nucleus. In terms of biological role, DNA-dependent RNA polymerase catalyzes the transcription of DNA into RNA using the four ribonucleoside triphosphates as substrates. Specific core component of RNA polymerase III which synthesizes small RNAs, such as 5S rRNA and tRNAs. This Neurospora crassa (strain ATCC 24698 / 74-OR23-1A / CBS 708.71 / DSM 1257 / FGSC 987) protein is DNA-directed RNA polymerase III subunit rpc-3 (rpc-82).